Consider the following 257-residue polypeptide: uncharacterized protein (257 aa).

A signal peptide spans 1–22 (MIHSRKLRLWLYLVLLAVFIGA). Cys23 is lipidated: N-palmitoyl cysteine. The S-diacylglycerol cysteine moiety is linked to residue Cys23.

The protein belongs to the staphylococcal tandem lipoprotein family.

The protein resides in the cell membrane. This is an uncharacterized protein from Staphylococcus aureus (strain Mu50 / ATCC 700699).